The chain runs to 132 residues: ATP synthase epsilon chain (132 aa).

The protein belongs to the ATPase epsilon chain family. In terms of assembly, F-type ATPases have 2 components, CF(1) - the catalytic core - and CF(0) - the membrane proton channel. CF(1) has five subunits: alpha(3), beta(3), gamma(1), delta(1), epsilon(1). CF(0) has three main subunits: a, b and c.

It localises to the cell membrane. Produces ATP from ADP in the presence of a proton gradient across the membrane. In Brevibacillus brevis (strain 47 / JCM 6285 / NBRC 100599), this protein is ATP synthase epsilon chain.